We begin with the raw amino-acid sequence, 341 residues long: MDDDASMSIRWGGFFESPARNLGLQLMSSVPAERDTKQLLSGSPFLHHQHQQHVPHHHHQPHHPRDCGANGNANGGAMPPPPATEAPPSMPMNFARSDMWMHPQQQQQHHHPREHKALHNLTVGHGSSHIAHHDPVGYGMIPGTHTLQMMQQQTEPQLQPPPPPQQPKEECISSPLIEENVPVIDEPPPPKKRQQGRQPKVPRAKKPKKSAAPREDGAPPNAPAPRRRGPRKNIGMVINGIDLDLSRIPTPICSCTGAPQQCYRWGAGGWQSACCTTTISTYPLPMSTKRRGARIAGRKMSHGAFKKVLEKLAGEGYNLNNPIDLKTFWAKHGTNKFVTIR.

Residues His-48–His-62 are compositionally biased toward basic residues. 2 disordered regions span residues His-48–Ala-95 and Met-150–Ile-234. Residues Gly-68–Ala-77 are compositionally biased toward low complexity. Pro residues predominate over residues Met-78–Met-90. Positions Pro-190 to Ala-211 are enriched in basic residues.

The protein belongs to the BBR/BPC family.

The protein resides in the nucleus. Functionally, transcriptional regulator that specifically binds to GA-rich elements (GAGA-repeats) present in regulatory sequences of genes involved in developmental processes. This chain is Barley B recombinant-like protein A, found in Oryza sativa subsp. japonica (Rice).